The sequence spans 766 residues: Single-minded homolog 1 (766 aa).

A bHLH domain is found at 1–53; sequence MKEKSKNAARTRREKENSEFYELAKLLPLPSAITSQLDKASIIRLTTSYLKMR. 2 consecutive PAS domains span residues 77 to 147 and 218 to 288; these read GREL…QPYH and PPSA…LVKG. A PAC domain is found at 292 to 335; the sequence is TKYYRFLAKHGGWVWVQSYATIVHNSRSSRPHCIVSVNYVLTDT. A Single-minded C-terminal domain is found at 336–766; that stretch reads EYKGLQLSLD…GTSVIITNGS (431 aa). A compositionally biased stretch (polar residues) spans 353 to 365; the sequence is AFSYTSSSTPTMT. 2 disordered regions span residues 353-431 and 528-563; these read AFSY…SQHD and WDEDSVVSSPDPGSASESGDRYRTEQYQSSPHEPSK. The Nuclear localization signal motif lies at 368–387; the sequence is RKGAKSRLSSSKSKSRTSPY. A compositionally biased stretch (low complexity) spans 373-385; it reads SRLSSSKSKSRTS. The segment covering 394 to 404 has biased composition (basic and acidic residues); sequence HTERSESDHDS.

Efficient DNA binding requires dimerization with another bHLH protein. Heterodimer; forms a heterodimer with ARNT, ARNT2.

It is found in the nucleus. Transcriptional factor that may have pleiotropic effects during embryogenesis and in the adult. The sequence is that of Single-minded homolog 1 (SIM1) from Homo sapiens (Human).